The sequence spans 1145 residues: Probable ATP-dependent RNA helicase DHX34 (1145 aa).

Basic and acidic residues predominate over residues 1–14 (MPPPRTREGRGHRD). Residues 1–27 (MPPPRTREGRGHRDRDHHRAPREEEAP) are disordered. The Helicase ATP-binding domain occupies 174–334 (LQTLKEHQVV…FSHAPVVQVP (161 aa)). 187 to 194 (GDTGCGKS) contacts ATP. The DEAH box motif lies at 281–284 (DEVH). In terms of domain architecture, Helicase C-terminal spans 370 to 538 (AIDNKYPPEE…ALVLQMKSMS (169 aa)). 2 disordered regions span residues 726-764 (LKRQ…QRAD) and 1091-1114 (NTCP…PQKT). Phosphoserine is present on residues S749 and S750.

It belongs to the DEAD box helicase family. DEAH subfamily. In terms of assembly, forms a complex with RUVBL1 and RUVBL2. Part of a complex composed of SMG1, DHX34 and UPF1; within the complex DHX34 acts as a scaffolding protein to facilitate SMG1 phosphorylation of UPF1. Interacts with UPF1, MOV10, EIF4A3, XRN2, SMG6, SMG7, SMG9, UPF3A, UPF3B, CASC3/MLN51, XRN1, DIS3 and DCP1A; the interactions are RNA-independent. Interacts with NCBP1/CPB80; the interaction is RNA-dependent. Interacts (via C-terminus) with SMG1; the interaction is RNA-independent.

It carries out the reaction ATP + H2O = ADP + phosphate + H(+). Functionally, probable ATP-binding RNA helicase. Required for nonsense-mediated decay (NMD) degradation of mRNA transcripts containing premature stop codons. Promotes the phosphorylation of UPF1 along with its interaction with key NMD pathway proteins UPF2 and EIF4A3. Negatively regulates the nucleotide binding ability and ATP hydrolysis of the RUVBL1-RUVBL2 complex via induction of N-terminus conformation changes of the RUVBL2 subunits. This chain is Probable ATP-dependent RNA helicase DHX34, found in Mus musculus (Mouse).